A 178-amino-acid chain; its full sequence is Large ribosomal subunit protein uL6 (178 aa).

This sequence belongs to the universal ribosomal protein uL6 family. As to quaternary structure, part of the 50S ribosomal subunit.

Functionally, this protein binds to the 23S rRNA, and is important in its secondary structure. It is located near the subunit interface in the base of the L7/L12 stalk, and near the tRNA binding site of the peptidyltransferase center. The protein is Large ribosomal subunit protein uL6 of Kocuria rhizophila (strain ATCC 9341 / DSM 348 / NBRC 103217 / DC2201).